The chain runs to 349 residues: Isopentenyl-diphosphate delta-isomerase (349 aa).

Residue 6–7 (RK) participates in substrate binding. Residues 62–64 (AMT), Ser93, and Asn122 contribute to the FMN site. Gln152 provides a ligand contact to substrate. A Mg(2+)-binding site is contributed by Glu153. Residues Lys184, Thr214, 258-259 (GG), and 280-281 (AG) each bind FMN.

This sequence belongs to the IPP isomerase type 2 family. As to quaternary structure, homooctamer. Dimer of tetramers. FMN serves as cofactor. Requires NADPH as cofactor. It depends on Mg(2+) as a cofactor.

The protein resides in the cytoplasm. The enzyme catalyses isopentenyl diphosphate = dimethylallyl diphosphate. Functionally, involved in the biosynthesis of isoprenoids. Catalyzes the 1,3-allylic rearrangement of the homoallylic substrate isopentenyl (IPP) to its allylic isomer, dimethylallyl diphosphate (DMAPP). The protein is Isopentenyl-diphosphate delta-isomerase of Bacillus cytotoxicus (strain DSM 22905 / CIP 110041 / 391-98 / NVH 391-98).